Consider the following 107-residue polypeptide: Cysteine proteinase inhibitor (107 aa).

In terms of domain architecture, Cystatin spans Gly-18–Ala-107. Residues Gln-63–Gly-67 carry the Secondary area of contact motif.

Belongs to the cystatin family. Phytocystatin subfamily. In terms of tissue distribution, expressed in embryos, developing endosperms, leaves, roots, flowers and pollen grains.

In terms of biological role, inhibits papain, ficin, cathepsin B and, to a lesser extent, chymopapain, but is inactive against bromelain. Inhibits the growth of pathogenic fungi. Regulated by the DOF transcription factors SAD (activator) and BPBF (repressor). This Hordeum vulgare (Barley) protein is Cysteine proteinase inhibitor (ICY).